Reading from the N-terminus, the 154-residue chain is dCTP deaminase (154 aa).

Residues 79-84, aspartate 95, glutamine 124, and tyrosine 138 each bind dCTP; that span reads RSSLAR.

Belongs to the dCTP deaminase family. In terms of assembly, homotrimer.

It catalyses the reaction dCTP + H2O + H(+) = dUTP + NH4(+). Its pathway is pyrimidine metabolism; dUMP biosynthesis; dUMP from dCTP (dUTP route): step 1/2. Catalyzes the deamination of dCTP to dUTP. The chain is dCTP deaminase from Pyrococcus abyssi (strain GE5 / Orsay).